The sequence spans 438 residues: GTPase Obg (438 aa).

Residues 6–164 enclose the Obg domain; sequence AEFVDRVKIF…RWLELELKIL (159 aa). In terms of domain architecture, OBG-type G spans 165-335; sequence ADVGLVGYPN…LLDRVASIVR (171 aa). GTP is bound by residues 171–178, 196–200, 217–220, 287–290, and 316–318; these read GYPNVGKS, FTTLV, DIPG, NKID, and SAV. Mg(2+)-binding residues include Ser-178 and Thr-198. One can recognise an OCT domain in the interval 358 to 438; sequence VWRKLPERFE…IGNFEFEYRE (81 aa).

The protein belongs to the TRAFAC class OBG-HflX-like GTPase superfamily. OBG GTPase family. Monomer. The cofactor is Mg(2+).

Its subcellular location is the cytoplasm. An essential GTPase which binds GTP, GDP and possibly (p)ppGpp with moderate affinity, with high nucleotide exchange rates and a fairly low GTP hydrolysis rate. Plays a role in control of the cell cycle, stress response, ribosome biogenesis and in those bacteria that undergo differentiation, in morphogenesis control. The chain is GTPase Obg from Thermotoga neapolitana (strain ATCC 49049 / DSM 4359 / NBRC 107923 / NS-E).